Here is a 189-residue protein sequence, read N- to C-terminus: Potassium-transporting ATPase KdpC subunit (189 aa).

The chain crosses the membrane as a helical span at residues 10–30 (VIFAMLTLICGVIYPYAITGI).

Belongs to the KdpC family. As to quaternary structure, the system is composed of three essential subunits: KdpA, KdpB and KdpC.

Its subcellular location is the cell inner membrane. Functionally, part of the high-affinity ATP-driven potassium transport (or Kdp) system, which catalyzes the hydrolysis of ATP coupled with the electrogenic transport of potassium into the cytoplasm. This subunit acts as a catalytic chaperone that increases the ATP-binding affinity of the ATP-hydrolyzing subunit KdpB by the formation of a transient KdpB/KdpC/ATP ternary complex. This is Potassium-transporting ATPase KdpC subunit from Janthinobacterium sp. (strain Marseille) (Minibacterium massiliensis).